The sequence spans 193 residues: Superoxide dismutase [Fe] (193 aa).

Fe cation contacts are provided by H27, H75, D159, and H163.

This sequence belongs to the iron/manganese superoxide dismutase family. Homodimer. Fe cation serves as cofactor.

It carries out the reaction 2 superoxide + 2 H(+) = H2O2 + O2. Its function is as follows. Destroys superoxide anion radicals which are normally produced within the cells and which are toxic to biological systems. This chain is Superoxide dismutase [Fe] (sodB), found in Bacteroides fragilis (strain YCH46).